Here is a 442-residue protein sequence, read N- to C-terminus: tRNA-2-methylthio-N(6)-dimethylallyladenosine synthase (442 aa).

Residues 2–120 (KKVFIRTFGC…LPKMIVDKET (119 aa)) form the MTTase N-terminal domain. [4Fe-4S] cluster contacts are provided by Cys11, Cys49, Cys83, Cys157, Cys161, and Cys164. In terms of domain architecture, Radical SAM core spans 143–375 (RVEGGAAFVS…NEVIEAETAR (233 aa)). The region spanning 378–441 (QTMIGTVQRC…TFSLRGKIVE (64 aa)) is the TRAM domain.

Belongs to the methylthiotransferase family. MiaB subfamily. As to quaternary structure, monomer. It depends on [4Fe-4S] cluster as a cofactor.

The protein localises to the cytoplasm. It catalyses the reaction N(6)-dimethylallyladenosine(37) in tRNA + (sulfur carrier)-SH + AH2 + 2 S-adenosyl-L-methionine = 2-methylsulfanyl-N(6)-dimethylallyladenosine(37) in tRNA + (sulfur carrier)-H + 5'-deoxyadenosine + L-methionine + A + S-adenosyl-L-homocysteine + 2 H(+). In terms of biological role, catalyzes the methylthiolation of N6-(dimethylallyl)adenosine (i(6)A), leading to the formation of 2-methylthio-N6-(dimethylallyl)adenosine (ms(2)i(6)A) at position 37 in tRNAs that read codons beginning with uridine. The chain is tRNA-2-methylthio-N(6)-dimethylallyladenosine synthase from Neisseria gonorrhoeae (strain ATCC 700825 / FA 1090).